We begin with the raw amino-acid sequence, 277 residues long: Large ribosomal subunit protein uL2c (277 aa).

A disordered region spans residues 226-249 (NPIDHPHGGGEGRAPIGREKPLTP). Basic and acidic residues predominate over residues 229-246 (DHPHGGGEGRAPIGREKP).

The protein belongs to the universal ribosomal protein uL2 family. Part of the 50S ribosomal subunit.

Its subcellular location is the plastid. It localises to the chloroplast. The protein is Large ribosomal subunit protein uL2c (rpl2) of Physcomitrium patens (Spreading-leaved earth moss).